The sequence spans 148 residues: Single-stranded DNA-binding protein, mitochondrial (148 aa).

The transit peptide at 1-16 (MFRRPVVQVLRQFVRH) directs the protein to the mitochondrion. In terms of domain architecture, SSB spans 30-141 (LNRVQLLGRV…IIADNIIFLS (112 aa)). Serine 67 and serine 79 each carry phosphoserine. Lysine 113 bears the N6-acetyllysine mark. Lysine 122 carries the post-translational modification N6-succinyllysine.

In terms of assembly, homotetramer. Interacts with MPG/AAG, through inhibition of its glycosylase activity it potentially prevents formation of DNA breaks in ssDNA, ensuring that base removal primarily occurs in dsDNA. Interacts with POLDIP2. Interacts with PRIMPOL.

It is found in the mitochondrion. The protein localises to the mitochondrion matrix. It localises to the mitochondrion nucleoid. Functionally, binds preferentially and cooperatively to pyrimidine rich single-stranded DNA (ss-DNA). In vitro, required to maintain the copy number of mitochondrial DNA (mtDNA) and plays a crucial role during mtDNA replication by stimulating the activity of the replisome components POLG and TWNK at the replication fork. Promotes the activity of the gamma complex polymerase POLG, largely by organizing the template DNA and eliminating secondary structures to favor ss-DNA conformations that facilitate POLG activity. In addition it is able to promote the 5'-3' unwinding activity of the mtDNA helicase TWNK. May also function in mtDNA repair. The protein is Single-stranded DNA-binding protein, mitochondrial (SSBP1) of Bos taurus (Bovine).